A 318-amino-acid polypeptide reads, in one-letter code: Dihydroorotate dehydrogenase B (NAD(+)), catalytic subunit (318 aa).

Residues Ser-19 and 43–44 each bind FMN; that span reads KT. Substrate contacts are provided by residues Lys-43, 69-73, and Asn-125; that span reads NAMGL. Asn-125 provides a ligand contact to FMN. Cys-128 functions as the Nucleophile in the catalytic mechanism. Lys-164 and Val-192 together coordinate FMN. 193 to 194 lines the substrate pocket; it reads NT. Residues Gly-219, 247 to 248, and 269 to 270 each bind FMN; these read GG and AT.

Belongs to the dihydroorotate dehydrogenase family. Type 1 subfamily. In terms of assembly, heterotetramer of 2 PyrK and 2 PyrD type B subunits. It depends on FMN as a cofactor.

The protein resides in the cytoplasm. It catalyses the reaction (S)-dihydroorotate + NAD(+) = orotate + NADH + H(+). The protein operates within pyrimidine metabolism; UMP biosynthesis via de novo pathway; orotate from (S)-dihydroorotate (NAD(+) route): step 1/1. Catalyzes the conversion of dihydroorotate to orotate with NAD(+) as electron acceptor. The polypeptide is Dihydroorotate dehydrogenase B (NAD(+)), catalytic subunit (pyrD) (Methanopyrus kandleri (strain AV19 / DSM 6324 / JCM 9639 / NBRC 100938)).